The following is a 100-amino-acid chain: NADH-quinone oxidoreductase subunit K (100 aa).

A run of 3 helical transmembrane segments spans residues 4–24, 28–48, and 61–81; these read FEYYVALSGLLMVLGFIGVII, IIAMLLSTELMLNAVNIAFVA, and FVFFILTIAAAEAAIGLGLII.

This sequence belongs to the complex I subunit 4L family. In terms of assembly, NDH-1 is composed of 14 different subunits. Subunits NuoA, H, J, K, L, M, N constitute the membrane sector of the complex.

The protein localises to the cell inner membrane. It catalyses the reaction a quinone + NADH + 5 H(+)(in) = a quinol + NAD(+) + 4 H(+)(out). NDH-1 shuttles electrons from NADH, via FMN and iron-sulfur (Fe-S) centers, to quinones in the respiratory chain. The immediate electron acceptor for the enzyme in this species is believed to be ubiquinone. Couples the redox reaction to proton translocation (for every two electrons transferred, four hydrogen ions are translocated across the cytoplasmic membrane), and thus conserves the redox energy in a proton gradient. The sequence is that of NADH-quinone oxidoreductase subunit K from Sulfurihydrogenibium sp. (strain YO3AOP1).